The sequence spans 165 residues: 3-isopropylmalate dehydratase small subunit (165 aa).

It belongs to the LeuD family. LeuD type 2 subfamily. Heterodimer of LeuC and LeuD.

The enzyme catalyses (2R,3S)-3-isopropylmalate = (2S)-2-isopropylmalate. Its pathway is amino-acid biosynthesis; L-leucine biosynthesis; L-leucine from 3-methyl-2-oxobutanoate: step 2/4. In terms of biological role, catalyzes the isomerization between 2-isopropylmalate and 3-isopropylmalate, via the formation of 2-isopropylmaleate. The protein is 3-isopropylmalate dehydratase small subunit of Lachnoclostridium phytofermentans (strain ATCC 700394 / DSM 18823 / ISDg) (Clostridium phytofermentans).